A 740-amino-acid polypeptide reads, in one-letter code: Protein SIEVE ELEMENT OCCLUSION B (740 aa).

Polar residues predominate over residues 1 to 23 (MESLIKSQHAQQLAGHKNTTGKT). The interval 1–27 (MESLIKSQHAQQLAGHKNTTGKTPSME) is disordered.

Can form homodimer. As to expression, expressed in phloem sieve elements.

In terms of biological role, scaffold protein required to form the phloem filament matrix in sieve elements. In Arabidopsis thaliana (Mouse-ear cress), this protein is Protein SIEVE ELEMENT OCCLUSION B.